We begin with the raw amino-acid sequence, 750 residues long: Polyribonucleotide nucleotidyltransferase (750 aa).

The Mg(2+) site is built by Asp519 and Asp525. Residues 585 to 644 form the KH domain; sequence PRVIAVKIPVDKIGEVIGPKGKMINQIQEDTGADISIEDDGTVYIGATNGPSADAARSAI. In terms of domain architecture, S1 motif spans 656–728; that stretch reads GERYLGTVVK…DRGKLSLSPV (73 aa). The segment at 725–750 is disordered; the sequence is LSPVVAEEEGAASEDAPAEAAEESAE. Residues 730 to 750 are compositionally biased toward acidic residues; it reads AEEEGAASEDAPAEAAEESAE.

The protein belongs to the polyribonucleotide nucleotidyltransferase family. The cofactor is Mg(2+).

It is found in the cytoplasm. The enzyme catalyses RNA(n+1) + phosphate = RNA(n) + a ribonucleoside 5'-diphosphate. Involved in mRNA degradation. Catalyzes the phosphorolysis of single-stranded polyribonucleotides processively in the 3'- to 5'-direction. In Paenarthrobacter aurescens (strain TC1), this protein is Polyribonucleotide nucleotidyltransferase.